A 373-amino-acid polypeptide reads, in one-letter code: Flagellar P-ring protein (373 aa).

Residues 1 to 26 (MRLLFRFLTLVAVLAMSLADVAPAWA) form the signal peptide.

The protein belongs to the FlgI family. The basal body constitutes a major portion of the flagellar organelle and consists of four rings (L,P,S, and M) mounted on a central rod.

The protein localises to the periplasm. The protein resides in the bacterial flagellum basal body. Functionally, assembles around the rod to form the L-ring and probably protects the motor/basal body from shearing forces during rotation. This is Flagellar P-ring protein from Rhizobium etli (strain CIAT 652).